The primary structure comprises 176 residues: Nudix hydrolase 18, mitochondrial (176 aa).

A mitochondrion-targeting transit peptide spans 1 to 21 (MVCLVSRTGRQSQRYNKGRRQ). Residues 22 to 153 (VVGCIPYRLK…WMKEALDVLV (132 aa)) form the Nudix hydrolase domain. The Nudix box motif lies at 60-81 (GGWELDESVEEAASRESLEEAG). Mg(2+) is bound by residues Glu-75 and Glu-79.

This sequence belongs to the Nudix hydrolase family. Mg(2+) is required as a cofactor. Requires Mn(2+) as cofactor. Expressed in roots, stems and inflorescences.

It is found in the mitochondrion. Probably mediates the hydrolysis of some nucleoside diphosphate derivatives. The polypeptide is Nudix hydrolase 18, mitochondrial (NUDT18) (Arabidopsis thaliana (Mouse-ear cress)).